The primary structure comprises 401 residues: Phosphoglycerate kinase (401 aa).

Substrate contacts are provided by residues 21 to 23, R36, 59 to 62, R119, and R160; these read DFN and HLGR. ATP is bound by residues K212, E330, and 357-360; that span reads GGDS.

This sequence belongs to the phosphoglycerate kinase family. Monomer.

It localises to the cytoplasm. The enzyme catalyses (2R)-3-phosphoglycerate + ATP = (2R)-3-phospho-glyceroyl phosphate + ADP. It participates in carbohydrate degradation; glycolysis; pyruvate from D-glyceraldehyde 3-phosphate: step 2/5. The polypeptide is Phosphoglycerate kinase (Limosilactobacillus reuteri subsp. reuteri (strain JCM 1112) (Lactobacillus reuteri)).